A 335-amino-acid polypeptide reads, in one-letter code: Mevalonate kinase (335 aa).

111–121 (PVGAGLGSSAA) is a binding site for ATP. Catalysis depends on D162, which acts as the Proton acceptor.

The protein belongs to the GHMP kinase family. Mevalonate kinase subfamily. As to quaternary structure, homodimer. Mg(2+) serves as cofactor.

The protein resides in the cytoplasm. It catalyses the reaction (R)-mevalonate + ATP = (R)-5-phosphomevalonate + ADP + H(+). Its pathway is isoprenoid biosynthesis; isopentenyl diphosphate biosynthesis via mevalonate pathway; isopentenyl diphosphate from (R)-mevalonate: step 1/3. Its function is as follows. Catalyzes the phosphorylation of (R)-mevalonate (MVA) to (R)-mevalonate 5-phosphate (MVAP). Functions in the mevalonate (MVA) pathway leading to isopentenyl diphosphate (IPP), a key precursor for the biosynthesis of isoprenoid compounds such as archaeal membrane lipids. This chain is Mevalonate kinase, found in Pyrococcus abyssi (strain GE5 / Orsay).